The primary structure comprises 122 residues: Large ribosomal subunit protein uL14 (122 aa).

Belongs to the universal ribosomal protein uL14 family. Part of the 50S ribosomal subunit. Forms a cluster with proteins L3 and L19. In the 70S ribosome, L14 and L19 interact and together make contacts with the 16S rRNA in bridges B5 and B8.

In terms of biological role, binds to 23S rRNA. Forms part of two intersubunit bridges in the 70S ribosome. In Micrococcus luteus (Micrococcus lysodeikticus), this protein is Large ribosomal subunit protein uL14.